Consider the following 218-residue polypeptide: MTTRNDVAQMIDHTLLKPEATTDDFKALIADAVRLGTYSVCVSPSALPVEVPENLHVATVVGFPSGAVKPEIKAAEAARTVADGAEEVDMVINIALAKEGKFDELEAEIKAVRDAVPAPGILKVILETAALTDDEIVAACKASENAGADFVKTSTGFHPAGGASVHAVEIMHATVGGRLGIKASGGIRTAKDALAMIEAGATRLGLSASAAILEELGE.

Asp89 acts as the Proton donor/acceptor in catalysis. Lys152 functions as the Schiff-base intermediate with acetaldehyde in the catalytic mechanism. Lys182 functions as the Proton donor/acceptor in the catalytic mechanism.

This sequence belongs to the DeoC/FbaB aldolase family. DeoC type 1 subfamily.

It is found in the cytoplasm. The catalysed reaction is 2-deoxy-D-ribose 5-phosphate = D-glyceraldehyde 3-phosphate + acetaldehyde. It participates in carbohydrate degradation; 2-deoxy-D-ribose 1-phosphate degradation; D-glyceraldehyde 3-phosphate and acetaldehyde from 2-deoxy-alpha-D-ribose 1-phosphate: step 2/2. Functionally, catalyzes a reversible aldol reaction between acetaldehyde and D-glyceraldehyde 3-phosphate to generate 2-deoxy-D-ribose 5-phosphate. This chain is Deoxyribose-phosphate aldolase, found in Corynebacterium diphtheriae (strain ATCC 700971 / NCTC 13129 / Biotype gravis).